The primary structure comprises 349 residues: Aquaporin-4 (349 aa).

2 helical membrane-spanning segments follow: residues 92–112 (LSES…AATA) and 125–147 (AFYH…GGLL). Positions 148–150 (NPA) match the NPA 1 motif. A helical membrane pass occupies residues 167 to 187 (LIYMSAQYFGAFIASAVVYLI). Asparagine 194 and asparagine 207 each carry an N-linked (GlcNAc...) asparagine glycan. A run of 2 helical transmembrane segments spans residues 225 to 245 (GAIF…LSIC) and 256 to 276 (MFPF…SYSA). The NPA 2 signature appears at 281–283 (NPA). A helical membrane pass occupies residues 314–334 (WLFPYVGALLGGVIYEIFIGI).

It belongs to the MIP/aquaporin (TC 1.A.8) family.

It localises to the cell membrane. In terms of biological role, aquaglyceroporin that may modulate the water content and osmolytes during anhydrobiosis. This is Aquaporin-4 from Milnesium tardigradum (Water bear).